Consider the following 435-residue polypeptide: Actin-like protein 7A (435 aa).

Residues 1-64 (MWAPPAAIMG…TESKAAKERP (64 aa)) form a disordered region. Residues 20–31 (QAPLQTQALQTA) show a composition bias toward low complexity. The tract at residues 31–51 (ASLRDGPAKRAVWVRHTSSEP) is required for interaction with TES. Positions 55–64 (TESKAAKERP) are enriched in basic and acidic residues.

It belongs to the actin family. Interacts (via N-terminus) with TES (via LIM domain 2). Heterodimer with TES; the heterodimer interacts with ENAH to form a heterotrimer. Interacts with ACTL9. Interacts with CYLC1; the interaction may be relevant for proper acrosome attachment to the nuclear envelope. In terms of tissue distribution, strongly expressed in testis. Also expressed in other tissues.

It is found in the cytoplasm. It localises to the cytoskeleton. The protein localises to the golgi apparatus. The protein resides in the nucleus. Its subcellular location is the cytoplasmic vesicle. It is found in the secretory vesicle. It localises to the acrosome. Essential for normal spermatogenesis and male fertility. Required for normal sperm head morphology, acroplaxome formation, acrosome attachment, and acrosome granule stability. May anchor and stabilize acrosomal adherence to the acroplaxome at least in part by facilitating the presence of F-actin in the subacrosomal space. May play an important role in formation and fusion of Golgi-derived vesicles during acrosome biogenesis. The protein is Actin-like protein 7A (ACTL7A) of Homo sapiens (Human).